Here is a 326-residue protein sequence, read N- to C-terminus: Probable sodium/potassium-transporting ATPase subunit beta-3 (326 aa).

At 1-59 (MMSSRTRKIYLFVFMFISTSLQLMNGEAKAEPETFRQFLYNKQKGTVLGRTGTSWCQIT) the chain is on the cytoplasmic side. The chain crosses the membrane as a helical; Signal-anchor for type II membrane protein span at residues 60 to 80 (VFYIIFYIFLSAFFIGCLAIF). The Lumenal segment spans residues 81–326 (LKTLDPKVPR…DKKPVAAPAA (246 aa)). N-linked (GlcNAc...) asparagine glycosylation is found at N144 and N147. Residues C234 and C291 are joined by a disulfide bond.

Belongs to the X(+)/potassium ATPases subunit beta family. As to quaternary structure, the sodium/potassium-transporting ATPase is composed of a catalytic alpha subunit, an auxiliary non-catalytic beta subunit and an additional regulatory subunit.

The protein resides in the cell membrane. Functionally, this is the non-catalytic component of the active enzyme, which catalyzes the hydrolysis of ATP coupled with the exchange of Na(+) and K(+) ions across the plasma membrane. The beta subunit regulates, through assembly of alpha/beta heterodimers, the number of sodium pumps transported to the plasma membrane. Implicated in genomic response to various soil bacteria that affects fitness, lifespan and brood size. This is Probable sodium/potassium-transporting ATPase subunit beta-3 (nkb-3) from Caenorhabditis briggsae.